We begin with the raw amino-acid sequence, 229 residues long: MNSIKFPVLDRTTKNSVISTTLNDLSNWSRLSSLWPLLYGTSCCFIEFASLIGSRFDFDRYGLVPRSSPRQADLILTAGTVTMKMAPSLVRLYEQMPEPKYVIAMGACTITGGMFSTDSYSTVRGVDKLIPVDVYLPGCPPKPEAVIDAITKLRKKIAREIYKDKIRPQQGNRCFTTNHKFFIVRSTDTGNSDQELLYPPSSTSEISTETFFKYKSPVSSHELVNSGGF.

[4Fe-4S] cluster contacts are provided by Cys43, Cys44, Cys108, and Cys139.

Belongs to the complex I 20 kDa subunit family. NDH is composed of at least 16 different subunits, 5 of which are encoded in the nucleus. It depends on [4Fe-4S] cluster as a cofactor.

It is found in the plastid. Its subcellular location is the chloroplast thylakoid membrane. It carries out the reaction a plastoquinone + NADH + (n+1) H(+)(in) = a plastoquinol + NAD(+) + n H(+)(out). It catalyses the reaction a plastoquinone + NADPH + (n+1) H(+)(in) = a plastoquinol + NADP(+) + n H(+)(out). Its function is as follows. NDH shuttles electrons from NAD(P)H:plastoquinone, via FMN and iron-sulfur (Fe-S) centers, to quinones in the photosynthetic chain and possibly in a chloroplast respiratory chain. The immediate electron acceptor for the enzyme in this species is believed to be plastoquinone. Couples the redox reaction to proton translocation, and thus conserves the redox energy in a proton gradient. This is NAD(P)H-quinone oxidoreductase subunit K, chloroplastic from Aethionema cordifolium (Lebanon stonecress).